The primary structure comprises 324 residues: Ribose-phosphate pyrophosphokinase (324 aa).

Residues 45-47 (NGE) and 104-105 (RQ) each bind ATP. The Mg(2+) site is built by H138 and D178. K201 is an active-site residue. D-ribose 5-phosphate-binding positions include R203, D229, and 233-237 (DTGGT).

Belongs to the ribose-phosphate pyrophosphokinase family. Class I subfamily. As to quaternary structure, homohexamer. Mg(2+) serves as cofactor.

The protein localises to the cytoplasm. It catalyses the reaction D-ribose 5-phosphate + ATP = 5-phospho-alpha-D-ribose 1-diphosphate + AMP + H(+). The protein operates within metabolic intermediate biosynthesis; 5-phospho-alpha-D-ribose 1-diphosphate biosynthesis; 5-phospho-alpha-D-ribose 1-diphosphate from D-ribose 5-phosphate (route I): step 1/1. Its function is as follows. Involved in the biosynthesis of the central metabolite phospho-alpha-D-ribosyl-1-pyrophosphate (PRPP) via the transfer of pyrophosphoryl group from ATP to 1-hydroxyl of ribose-5-phosphate (Rib-5-P). This Streptomyces coelicolor (strain ATCC BAA-471 / A3(2) / M145) protein is Ribose-phosphate pyrophosphokinase.